We begin with the raw amino-acid sequence, 139 residues long: Ribulose bisphosphate carboxylase small subunit, chromosomal (139 aa).

Belongs to the RuBisCO small chain family. As to quaternary structure, heterohexadecamer of 8 large and 8 small subunits.

Functionally, ruBisCO catalyzes two reactions: the carboxylation of D-ribulose 1,5-bisphosphate, the primary event in carbon dioxide fixation, as well as the oxidative fragmentation of the pentose substrate. Both reactions occur simultaneously and in competition at the same active site. Although the small subunit is not catalytic it is essential for maximal activity. The protein is Ribulose bisphosphate carboxylase small subunit, chromosomal of Cupriavidus necator (Alcaligenes eutrophus).